The chain runs to 454 residues: Elongation factor Tu, mitochondrial (454 aa).

The transit peptide at 1–51 (MASVVLRNPSSKRLVPFSSQIYSRCGASVTSSYSISHSIGGDDLSSSTFGT) directs the protein to the mitochondrion. The tr-type G domain occupies 65–261 (KPHVNVGTIG…AVDEYIPDPV (197 aa)). The G1 stretch occupies residues 74–81 (GHVDHGKT). Position 74–81 (74–81 (GHVDHGKT)) interacts with GTP. T82 is modified (phosphothreonine). Positions 115–119 (GITIA) are G2. The tract at residues 136-139 (DCPG) is G3. Residues 136–140 (DCPGH) and 191–194 (NKVD) each bind GTP. A G4 region spans residues 191–194 (NKVD). The segment at 229-231 (SAL) is G5.

This sequence belongs to the TRAFAC class translation factor GTPase superfamily. Classic translation factor GTPase family. EF-Tu/EF-1A subfamily.

The protein resides in the mitochondrion. In terms of biological role, this protein promotes the GTP-dependent binding of aminoacyl-tRNA to the A-site of ribosomes during protein biosynthesis. The polypeptide is Elongation factor Tu, mitochondrial (TUFA) (Arabidopsis thaliana (Mouse-ear cress)).